The following is a 97-amino-acid chain: Glutamyl-tRNA(Gln) amidotransferase subunit C 2 (97 aa).

The protein belongs to the GatC family. As to quaternary structure, heterotrimer of A, B and C subunits.

It catalyses the reaction L-glutamyl-tRNA(Gln) + L-glutamine + ATP + H2O = L-glutaminyl-tRNA(Gln) + L-glutamate + ADP + phosphate + H(+). The enzyme catalyses L-aspartyl-tRNA(Asn) + L-glutamine + ATP + H2O = L-asparaginyl-tRNA(Asn) + L-glutamate + ADP + phosphate + 2 H(+). Allows the formation of correctly charged Asn-tRNA(Asn) or Gln-tRNA(Gln) through the transamidation of misacylated Asp-tRNA(Asn) or Glu-tRNA(Gln) in organisms which lack either or both of asparaginyl-tRNA or glutaminyl-tRNA synthetases. The reaction takes place in the presence of glutamine and ATP through an activated phospho-Asp-tRNA(Asn) or phospho-Glu-tRNA(Gln). The polypeptide is Glutamyl-tRNA(Gln) amidotransferase subunit C 2 (gatC2) (Clostridium acetobutylicum (strain ATCC 824 / DSM 792 / JCM 1419 / IAM 19013 / LMG 5710 / NBRC 13948 / NRRL B-527 / VKM B-1787 / 2291 / W)).